A 206-amino-acid chain; its full sequence is ATP-dependent Clp protease proteolytic subunit 1 (206 aa).

S103 (nucleophile) is an active-site residue. H128 is a catalytic residue.

The protein belongs to the peptidase S14 family. As to quaternary structure, fourteen ClpP subunits assemble into 2 heptameric rings which stack back to back to give a disk-like structure with a central cavity, resembling the structure of eukaryotic proteasomes.

It is found in the cytoplasm. The enzyme catalyses Hydrolysis of proteins to small peptides in the presence of ATP and magnesium. alpha-casein is the usual test substrate. In the absence of ATP, only oligopeptides shorter than five residues are hydrolyzed (such as succinyl-Leu-Tyr-|-NHMec, and Leu-Tyr-Leu-|-Tyr-Trp, in which cleavage of the -Tyr-|-Leu- and -Tyr-|-Trp bonds also occurs).. Cleaves peptides in various proteins in a process that requires ATP hydrolysis. Has a chymotrypsin-like activity. Plays a major role in the degradation of misfolded proteins. The protein is ATP-dependent Clp protease proteolytic subunit 1 of Protochlamydia amoebophila (strain UWE25).